The chain runs to 458 residues: ATP synthase subunit beta (458 aa).

148 to 155 lines the ATP pocket; that stretch reads GGAGVGKT.

Belongs to the ATPase alpha/beta chains family. F-type ATPases have 2 components, CF(1) - the catalytic core - and CF(0) - the membrane proton channel. CF(1) has five subunits: alpha(3), beta(3), gamma(1), delta(1), epsilon(1). CF(0) has three main subunits: a(1), b(2) and c(9-12). The alpha and beta chains form an alternating ring which encloses part of the gamma chain. CF(1) is attached to CF(0) by a central stalk formed by the gamma and epsilon chains, while a peripheral stalk is formed by the delta and b chains.

The protein resides in the cell inner membrane. The enzyme catalyses ATP + H2O + 4 H(+)(in) = ADP + phosphate + 5 H(+)(out). Its function is as follows. Produces ATP from ADP in the presence of a proton gradient across the membrane. The catalytic sites are hosted primarily by the beta subunits. The chain is ATP synthase subunit beta from Laribacter hongkongensis (strain HLHK9).